The sequence spans 35 residues: Photosystem II reaction center protein M (35 aa).

Residues 5-25 (ILGLIATALFILIPTSFLIIL) traverse the membrane as a helical segment.

Belongs to the PsbM family. As to quaternary structure, PSII is composed of 1 copy each of membrane proteins PsbA, PsbB, PsbC, PsbD, PsbE, PsbF, PsbH, PsbI, PsbJ, PsbK, PsbL, PsbM, PsbT, PsbX, PsbY, PsbZ, Psb30/Ycf12, at least 3 peripheral proteins of the oxygen-evolving complex and a large number of cofactors. It forms dimeric complexes.

The protein localises to the plastid. It is found in the chloroplast thylakoid membrane. In terms of biological role, one of the components of the core complex of photosystem II (PSII). PSII is a light-driven water:plastoquinone oxidoreductase that uses light energy to abstract electrons from H(2)O, generating O(2) and a proton gradient subsequently used for ATP formation. It consists of a core antenna complex that captures photons, and an electron transfer chain that converts photonic excitation into a charge separation. This subunit is found at the monomer-monomer interface. The chain is Photosystem II reaction center protein M from Oltmannsiellopsis viridis (Marine flagellate).